The sequence spans 314 residues: Methionyl-tRNA formyltransferase (314 aa).

110–113 is a (6S)-5,6,7,8-tetrahydrofolate binding site; it reads SLLP.

It belongs to the Fmt family.

It carries out the reaction L-methionyl-tRNA(fMet) + (6R)-10-formyltetrahydrofolate = N-formyl-L-methionyl-tRNA(fMet) + (6S)-5,6,7,8-tetrahydrofolate + H(+). In terms of biological role, attaches a formyl group to the free amino group of methionyl-tRNA(fMet). The formyl group appears to play a dual role in the initiator identity of N-formylmethionyl-tRNA by promoting its recognition by IF2 and preventing the misappropriation of this tRNA by the elongation apparatus. In Lactobacillus gasseri (strain ATCC 33323 / DSM 20243 / BCRC 14619 / CIP 102991 / JCM 1131 / KCTC 3163 / NCIMB 11718 / NCTC 13722 / AM63), this protein is Methionyl-tRNA formyltransferase.